Consider the following 501-residue polypeptide: Uridine kinase (501 aa).

A Phosphoserine modification is found at serine 17. 63-70 (GASGSGKT) contributes to the ATP binding site. The residue at position 276 (serine 276) is a Phosphoserine.

It belongs to the uridine kinase family.

Its subcellular location is the cytoplasm. It is found in the nucleus. The catalysed reaction is uridine + ATP = UMP + ADP + H(+). It catalyses the reaction cytidine + ATP = CMP + ADP + H(+). Its pathway is pyrimidine metabolism; CTP biosynthesis via salvage pathway; CTP from cytidine: step 1/3. It participates in pyrimidine metabolism; UMP biosynthesis via salvage pathway; UMP from uridine: step 1/1. Catalyzes the conversion of uridine into UMP and cytidine into CMP in the pyrimidine salvage pathway. This is Uridine kinase (URK1) from Saccharomyces cerevisiae (strain ATCC 204508 / S288c) (Baker's yeast).